The sequence spans 103 residues: UPF0145 protein Amet_0532 (103 aa).

Belongs to the UPF0145 family.

The protein is UPF0145 protein Amet_0532 of Alkaliphilus metalliredigens (strain QYMF).